A 390-amino-acid chain; its full sequence is S-adenosylmethionine synthase 1 (390 aa).

Residue E9 coordinates Mg(2+). H15 serves as a coordination point for ATP. Position 43 (E43) interacts with K(+). L-methionine is bound by residues E56 and Q99. Residues 167–169, 235–238, D246, 252–253, A269, K273, and K277 contribute to the ATP site; these read DGK, SGRF, and RK. D246 lines the L-methionine pocket. K277 contacts L-methionine.

It belongs to the AdoMet synthase family. As to quaternary structure, homotetramer. The cofactor is Mn(2+). Mg(2+) serves as cofactor. It depends on Co(2+) as a cofactor. Requires K(+) as cofactor.

The protein resides in the cytoplasm. It carries out the reaction L-methionine + ATP + H2O = S-adenosyl-L-methionine + phosphate + diphosphate. It functions in the pathway amino-acid biosynthesis; S-adenosyl-L-methionine biosynthesis; S-adenosyl-L-methionine from L-methionine: step 1/1. Functionally, catalyzes the formation of S-adenosylmethionine from methionine and ATP. The reaction comprises two steps that are both catalyzed by the same enzyme: formation of S-adenosylmethionine (AdoMet) and triphosphate, and subsequent hydrolysis of the triphosphate. This Nicotiana tabacum (Common tobacco) protein is S-adenosylmethionine synthase 1 (SAMS1).